The primary structure comprises 149 residues: D-aminoacyl-tRNA deacylase (149 aa).

Residues 141–142 (GP) carry the Gly-cisPro motif, important for rejection of L-amino acids motif.

This sequence belongs to the DTD family. In terms of assembly, homodimer.

The protein resides in the cytoplasm. It catalyses the reaction glycyl-tRNA(Ala) + H2O = tRNA(Ala) + glycine + H(+). The catalysed reaction is a D-aminoacyl-tRNA + H2O = a tRNA + a D-alpha-amino acid + H(+). Functionally, an aminoacyl-tRNA editing enzyme that deacylates mischarged D-aminoacyl-tRNAs. Also deacylates mischarged glycyl-tRNA(Ala), protecting cells against glycine mischarging by AlaRS. Acts via tRNA-based rather than protein-based catalysis; rejects L-amino acids rather than detecting D-amino acids in the active site. By recycling D-aminoacyl-tRNA to D-amino acids and free tRNA molecules, this enzyme counteracts the toxicity associated with the formation of D-aminoacyl-tRNA entities in vivo and helps enforce protein L-homochirality. This chain is D-aminoacyl-tRNA deacylase, found in Streptomyces griseus subsp. griseus (strain JCM 4626 / CBS 651.72 / NBRC 13350 / KCC S-0626 / ISP 5235).